Here is a 363-residue protein sequence, read N- to C-terminus: Elongation factor Tu, chloroplastic (363 aa).

The region spanning 1–189 is the tr-type G domain; the sequence is TLTAAITMAL…NVDEYIPTPE (189 aa). GTP is bound by residues 55–59 and 110–113; these read DCPGH and NKED.

This sequence belongs to the TRAFAC class translation factor GTPase superfamily. Classic translation factor GTPase family. EF-Tu/EF-1A subfamily.

Its subcellular location is the plastid. It localises to the chloroplast. It carries out the reaction GTP + H2O = GDP + phosphate + H(+). GTP hydrolase that promotes the GTP-dependent binding of aminoacyl-tRNA to the A-site of ribosomes during protein biosynthesis. This is Elongation factor Tu, chloroplastic (tufA) from Gymnochlora stellata.